A 176-amino-acid chain; its full sequence is NAD(P)H-quinone oxidoreductase subunit I, chloroplastic (176 aa).

4Fe-4S ferredoxin-type domains are found at residues 55–84 and 95–124; these read GRIH…VDWE and LNYS…MTEE. [4Fe-4S] cluster contacts are provided by C64, C67, C70, C74, C104, C107, C110, and C114.

The protein belongs to the complex I 23 kDa subunit family. As to quaternary structure, NDH is composed of at least 16 different subunits, 5 of which are encoded in the nucleus. Requires [4Fe-4S] cluster as cofactor.

It is found in the plastid. The protein localises to the chloroplast thylakoid membrane. The catalysed reaction is a plastoquinone + NADH + (n+1) H(+)(in) = a plastoquinol + NAD(+) + n H(+)(out). It carries out the reaction a plastoquinone + NADPH + (n+1) H(+)(in) = a plastoquinol + NADP(+) + n H(+)(out). In terms of biological role, NDH shuttles electrons from NAD(P)H:plastoquinone, via FMN and iron-sulfur (Fe-S) centers, to quinones in the photosynthetic chain and possibly in a chloroplast respiratory chain. The immediate electron acceptor for the enzyme in this species is believed to be plastoquinone. Couples the redox reaction to proton translocation, and thus conserves the redox energy in a proton gradient. The chain is NAD(P)H-quinone oxidoreductase subunit I, chloroplastic from Populus trichocarpa (Western balsam poplar).